The sequence spans 379 residues: Cytochrome b (379 aa).

4 consecutive transmembrane segments (helical) span residues 33–53 (FGSL…FLAM), 77–98 (WLIR…FIHV), 113–133 (WNIG…GYVL), and 178–198 (FFAF…VHLL). Heme b-binding residues include His83 and His97. Heme b is bound by residues His182 and His196. Residue His201 participates in a ubiquinone binding. The next 4 membrane-spanning stretches (helical) occupy residues 226–246 (TKDL…TLFF), 288–308 (LGGV…PLLN), 320–340 (ITQT…WIGG), and 347–367 (FTTI…ILIP).

This sequence belongs to the cytochrome b family. In terms of assembly, the cytochrome bc1 complex contains 11 subunits: 3 respiratory subunits (MT-CYB, CYC1 and UQCRFS1), 2 core proteins (UQCRC1 and UQCRC2) and 6 low-molecular weight proteins (UQCRH/QCR6, UQCRB/QCR7, UQCRQ/QCR8, UQCR10/QCR9, UQCR11/QCR10 and a cleavage product of UQCRFS1). This cytochrome bc1 complex then forms a dimer. The cofactor is heme b.

It is found in the mitochondrion inner membrane. Functionally, component of the ubiquinol-cytochrome c reductase complex (complex III or cytochrome b-c1 complex) that is part of the mitochondrial respiratory chain. The b-c1 complex mediates electron transfer from ubiquinol to cytochrome c. Contributes to the generation of a proton gradient across the mitochondrial membrane that is then used for ATP synthesis. In Akodon azarae (Azara's grass mouse), this protein is Cytochrome b (MT-CYB).